The chain runs to 85 residues: U4-theraphotoxin-Hhn1m (85 aa).

The N-terminal stretch at 1–22 (MKVTLIAILTCAAVLVLHTTAA) is a signal peptide. The propeptide occupies 23–48 (EELEAESQLVEVGMPDTELAAVDEER). 3 disulfide bridges follow: Cys-52-Cys-66, Cys-56-Cys-77, and Cys-71-Cys-82.

It belongs to the neurotoxin 12 (Hwtx-2) family. 02 (Hwtx-2) subfamily. Expressed by the venom gland.

The protein resides in the secreted. In terms of biological role, postsynaptic neurotoxin. This Cyriopagopus hainanus (Chinese bird spider) protein is U4-theraphotoxin-Hhn1m.